The chain runs to 69 residues: Large ribosomal subunit protein bL28 (69 aa).

The protein belongs to the bacterial ribosomal protein bL28 family.

In Aquifex aeolicus (strain VF5), this protein is Large ribosomal subunit protein bL28.